The following is a 134-amino-acid chain: Retinol-binding protein 2 (134 aa).

Residues Lys41 and Gln109 each coordinate all-trans-retinol.

Belongs to the calycin superfamily. Fatty-acid binding protein (FABP) family. In terms of tissue distribution, expressed in prenatal liver, intestine and lung, and in adult intestine.

The protein localises to the cytoplasm. In terms of biological role, intracellular transport of retinol. The chain is Retinol-binding protein 2 (Rbp2) from Mus musculus (Mouse).